A 243-amino-acid polypeptide reads, in one-letter code: UPF0758 protein Ava_0172 (243 aa).

The region spanning 113–235 is the MPN domain; it reads PIDSPVAAVA…HQSLREVTTL (123 aa). Zn(2+)-binding residues include His184, His186, and Asp197. The JAMM motif signature appears at 184-197; the sequence is HNHPSGNVEPSPED.

Belongs to the UPF0758 family.

The polypeptide is UPF0758 protein Ava_0172 (Trichormus variabilis (strain ATCC 29413 / PCC 7937) (Anabaena variabilis)).